The primary structure comprises 84 residues: Large ribosomal subunit protein bL27 (84 aa).

A disordered region spans residues 1–22 (MAHKKAGGSTRNGRDSESKRLG).

Belongs to the bacterial ribosomal protein bL27 family.

The protein is Large ribosomal subunit protein bL27 of Shewanella amazonensis (strain ATCC BAA-1098 / SB2B).